A 521-amino-acid chain; its full sequence is Jacalin-related lectin 38 (521 aa).

Residues 2–48 (MQPDHDLPYDLEGEILSHLPIQILARFRCVCKRWNTLFKERRFFNSD) enclose the F-box domain. 3 Kelch repeats span residues 145-190 (KHYK…PYSV), 326-373 (YIYI…ITQH), and 486-521 (MSFVLGGARGSKIIGFYGRSSDLYLTAFGVHFSPLP). Positions 377-519 (SRFAPLRGIQ…LTAFGVHFSP (143 aa)) constitute a Jacalin-type lectin domain.

It belongs to the jacalin lectin family.

In Arabidopsis thaliana (Mouse-ear cress), this protein is Jacalin-related lectin 38 (JAL38).